Reading from the N-terminus, the 318-residue chain is 2-keto-3-deoxygluconate permease (318 aa).

Helical transmembrane passes span 10-30 (IPGG…TFTP), 42-62 (GLIT…GASI), 76-96 (VLVV…GAFL), 105-125 (LLAG…NGGL), 139-159 (AGAF…VILG), 162-182 (GIAT…LIGF), 199-219 (VQTL…LSVI), 224-244 (FAGI…LILA), 254-274 (TAGI…LLIA), and 289-309 (ALVA…TALW).

The protein belongs to the KdgT transporter family.

It localises to the cell inner membrane. The enzyme catalyses 2-dehydro-3-deoxy-D-gluconate(in) + H(+)(in) = 2-dehydro-3-deoxy-D-gluconate(out) + H(+)(out). Its function is as follows. Catalyzes the proton-dependent uptake of 2-keto-3-deoxygluconate (KDG) into the cell. This is 2-keto-3-deoxygluconate permease from Pectobacterium atrosepticum (strain SCRI 1043 / ATCC BAA-672) (Erwinia carotovora subsp. atroseptica).